The sequence spans 647 residues: MADVYPVDPAFAADARVTREQYAALYRESIEHPEQFWGKAAQRLEWFKQPTQVKDVSYALDDFHIRWFGDGELNASVNCLDRQLATRGDKTALLFEPDSPDAASYPVTYRQLYERVCKLGNALRNLGVKKGDRVTIYLPMIVDAAVAMLACARIGAVHSVVFGGFAANSIADRVIDCQSKLIITADEGLRGGKKIPLKANVDAALKIPGTNTIETVLVVRHTGGAVEMQAPRDRWFHDVVDGQPAECEPERMNAEDPLFILYTSGSTGKPKGVLHTTAGYLLFASYTHEVVFDLREDDIYWCTADVGWVTGHSYIVYGPLANGATAVMFEGVPNYPNVSRFWEVIDKHQVTIFYTAPTAIRALMRDGAEPVKKTSRKSLRLLGSVGEPINPEAWRWYYDVVGDSRCPIVDTWWQTETGGILISPLAGAVDLKPGSATLPFFGVQPALVDAEGKILEGATEGNLVLLDSWPGQMRSVYGDHQRFIDTYFRTYPGSYFTGDGCRRDADGYYWITGRVDDVINVSGHRIGTAEVESALVSHPKVAEAAVVGFPHDVKGQGIYAYVTLIAGETPSDELHKELVSWVRKEIGPIASPDHLQWAPGLPKTRSGKIMRRILRKIAENAPDQLGDTSTLADPSVVDSLVNERLTR.

CoA-binding positions include 190-193 (RGGK), Thr-310, and Asn-334. Residues 386-388 (GEP), 410-415 (DTWWQT), Asp-499, and Arg-514 contribute to the ATP site. A CoA-binding site is contributed by Ser-522. ATP is bound at residue Arg-525. Residues Val-536, His-538, and Val-541 each contribute to the Mg(2+) site. Arg-583 provides a ligand contact to CoA. Lys-608 bears the N6-acetyllysine mark.

The protein belongs to the ATP-dependent AMP-binding enzyme family. Requires Mg(2+) as cofactor. Acetylated. Deacetylation by the SIR2-homolog deacetylase activates the enzyme.

The enzyme catalyses acetate + ATP + CoA = acetyl-CoA + AMP + diphosphate. In terms of biological role, catalyzes the conversion of acetate into acetyl-CoA (AcCoA), an essential intermediate at the junction of anabolic and catabolic pathways. AcsA undergoes a two-step reaction. In the first half reaction, AcsA combines acetate with ATP to form acetyl-adenylate (AcAMP) intermediate. In the second half reaction, it can then transfer the acetyl group from AcAMP to the sulfhydryl group of CoA, forming the product AcCoA. The protein is Acetyl-coenzyme A synthetase of Xanthomonas oryzae pv. oryzae (strain MAFF 311018).